A 206-amino-acid chain; its full sequence is Ribosomal RNA small subunit methyltransferase G (206 aa).

Residues G71, F76, 125 to 126, and R139 each bind S-adenosyl-L-methionine; that span reads IE.

Belongs to the methyltransferase superfamily. RNA methyltransferase RsmG family.

It localises to the cytoplasm. It carries out the reaction guanosine(527) in 16S rRNA + S-adenosyl-L-methionine = N(7)-methylguanosine(527) in 16S rRNA + S-adenosyl-L-homocysteine. Specifically methylates the N7 position of guanine in position 527 of 16S rRNA. This Cereibacter sphaeroides (strain ATCC 17029 / ATH 2.4.9) (Rhodobacter sphaeroides) protein is Ribosomal RNA small subunit methyltransferase G.